The primary structure comprises 155 residues: MKLQLCAVGRLRSGPERDLVEDYLGRFERTGRPLGLPAVQLLEVEDRKGGGMEAEADLLARAMAPGAVLAILDERGRTLSSPEFAEQLARWRDAGRDVALAIGGADGLAPRLRDRADLALSFGRMVWPHMLVRVMLAEQLYRAATILAGSPYHRV.

Residues Ile71, Gly103, and 122 to 127 (FGRMVW) contribute to the S-adenosyl-L-methionine site.

The protein belongs to the RNA methyltransferase RlmH family. As to quaternary structure, homodimer.

It is found in the cytoplasm. It catalyses the reaction pseudouridine(1915) in 23S rRNA + S-adenosyl-L-methionine = N(3)-methylpseudouridine(1915) in 23S rRNA + S-adenosyl-L-homocysteine + H(+). Functionally, specifically methylates the pseudouridine at position 1915 (m3Psi1915) in 23S rRNA. The sequence is that of Ribosomal RNA large subunit methyltransferase H from Cereibacter sphaeroides (strain ATCC 17025 / ATH 2.4.3) (Rhodobacter sphaeroides).